A 475-amino-acid chain; its full sequence is Ammonium transporter Rh type C (475 aa).

The Cytoplasmic portion of the chain corresponds to 1-20 (MGCVQSFRNFCDRPKNTNVR). Residues 21–41 (ISLPAVCFVWQIAMIILFGVF) traverse the membrane as a helical segment. Topologically, residues 42–73 (IRYNEEADTHWVEYRKKENISSDIENDFYFRY) are extracellular. An N-linked (GlcNAc...) asparagine glycan is attached at Asn60. Residues 74 to 94 (PSFQDVHVMIFVGFGFLMTFL) traverse the membrane as a helical segment. Residues 95–98 (KRYS) lie on the Cytoplasmic side of the membrane. The helical transmembrane segment at 99 to 119 (FGAVGFNFLIAAFGLQWALLM) threads the bilayer. Residues 120 to 138 (QGWFHSLDYTDGKIKIGIE) are Extracellular-facing. Residues 139-159 (NLINADFCVAGCLIAYGAVLG) traverse the membrane as a helical segment. At 160-167 (KVSPVQLM) the chain is on the cytoplasmic side. The chain crosses the membrane as a helical span at residues 168–188 (VLTLFGITLFAVEEYIILNLI). At 189–193 (HARDA) the chain is on the extracellular side. The chain crosses the membrane as a helical span at residues 194–214 (GGSMVIHTFGGYYGLSISWML). Residues 215–233 (YRPNLEQSSNLQGSVYQSD) are Cytoplasmic-facing. Residues 234–254 (VFAMIGTLFLWMFWPSFNSAI) form a helical membrane-spanning segment. Topologically, residues 255–265 (TDHGDGQHRAA) are extracellular. A helical transmembrane segment spans residues 266-286 (INTYLALASTVLTTVAISSLF). Over 287–299 (QKHGKLDMVHIQN) the chain is Cytoplasmic. A helical membrane pass occupies residues 300–320 (STLAGGVAVGTAAEFMLMPYG). Residue Ser321 is a topological domain, extracellular. The helical transmembrane segment at 322 to 342 (LIVGFCCGIISTLGYIYLTPF) threads the bilayer. The Cytoplasmic segment spans residues 343 to 357 (MEKYLKIQDTCGIHN). A helical membrane pass occupies residues 358–378 (LHAMPGLIGGIVGAITAAAAT). Residues 379–410 (ESVYGKEGLVNTFDFVGPFKNMVPTTQGGHQA) are Extracellular-facing. A helical transmembrane segment spans residues 411–431 (AGLCVAICFGIGGGIMVGCIL). The Cytoplasmic portion of the chain corresponds to 432–475 (RLPIWCDPADDNCFNDEPYWELPEEEEIIPPILHYNNHMVNKDV).

The protein belongs to the ammonium transporter (TC 2.A.49) family. Rh subfamily. Homotrimer.

It localises to the apical cell membrane. Functions as an ammonia transporter. May play a role in the elimination of ammonia in the gill. The chain is Ammonium transporter Rh type C (rhcg) from Tetraodon nigroviridis (Spotted green pufferfish).